A 397-amino-acid chain; its full sequence is Homocysteine-responsive endoplasmic reticulum-resident ubiquitin-like domain member 2 protein (397 aa).

A Ubiquitin-like domain is found at 10 to 89 (VTLVIKAPNQ…HMVHLVCASR (80 aa)). Disordered stretches follow at residues 87-166 (ASRS…MQGG) and 210-246 (APSPSLSAGPATQPVQPNEPAAPMGPNPAPEDRPANP). Composition is skewed to low complexity over residues 88–123 (SRSPPSSPTSDSHFSTTDSSSSTSDSAGPSLSSTPS) and 210–220 (APSPSLSAGPA). Residues 293-313 (FVMVIGAMLLVYLHQAGWFPF) traverse the membrane as a helical segment. The tract at residues 344–373 (DEGIEDDEGDSGEEGPDDPMNPGPHQPGFL) is disordered. Positions 345 to 360 (EGIEDDEGDSGEEGPD) are enriched in acidic residues.

It is found in the membrane. Functionally, could be involved in the unfolded protein response (UPR) pathway. This Danio rerio (Zebrafish) protein is Homocysteine-responsive endoplasmic reticulum-resident ubiquitin-like domain member 2 protein (herpud2).